A 349-amino-acid chain; its full sequence is Ribosome production factor 1 (349 aa).

Disordered stretches follow at residues 1-58 and 71-105; these read MAKA…SEIK and KQQQ…PKTI. A compositionally biased stretch (basic and acidic residues) spans 87-97; the sequence is KEREALGDKAP. Residues 142–325 form the Brix domain; that stretch reads PKILITTSDR…LRSLQKGTFD (184 aa). The segment at 303–320 is RNA-binding; sequence VGIQELGPRFTLKLRSLQ.

The protein localises to the nucleus. Its subcellular location is the nucleolus. Functionally, may be required for ribosome biogenesis. This is Ribosome production factor 1 (Rpf1) from Mus musculus (Mouse).